Consider the following 201-residue polypeptide: Probable GTP-binding protein EngB (201 aa).

In terms of domain architecture, EngB-type G spans 23–196 (TGPEIALAGR…HEAVEEILSM (174 aa)). GTP contacts are provided by residues 31-38 (GRSNVGKS), 58-62 (GKTQM), 76-79 (DLPG), 143-146 (TKAD), and 175-177 (YSA). Mg(2+) contacts are provided by Ser38 and Thr60.

The protein belongs to the TRAFAC class TrmE-Era-EngA-EngB-Septin-like GTPase superfamily. EngB GTPase family. The cofactor is Mg(2+).

Necessary for normal cell division and for the maintenance of normal septation. The sequence is that of Probable GTP-binding protein EngB from Desulfitobacterium hafniense (strain DSM 10664 / DCB-2).